The sequence spans 210 residues: MSLISNNEERSLRVRYCIAIALSALLISGCTTLRLPNQSTSVYHQQTWAQRYYDLSRISQWNIDGAFSIQQPGKTIIAAYDWQQKGMNYRIRIHSSLDIYSVNISGRPGMVTLWRSPRQHYTASTPEQLMQQQLGWQLPLSNLYYWIRGIPAPGAYQADFDTYTHLIALQQSGWHIRFSQYTTVGSVDLPRTLQLSNGPLAVKIVLKHWQ.

The N-terminal stretch at 1–29 is a signal peptide; sequence MSLISNNEERSLRVRYCIAIALSALLISG. Cys30 carries the N-palmitoyl cysteine lipid modification. Cys30 is lipidated: S-diacylglycerol cysteine.

The protein belongs to the LolB family. In terms of assembly, monomer.

The protein localises to the cell outer membrane. In terms of biological role, plays a critical role in the incorporation of lipoproteins in the outer membrane after they are released by the LolA protein. This Coxiella burnetii (strain CbuK_Q154) (Coxiella burnetii (strain Q154)) protein is Outer-membrane lipoprotein LolB.